The sequence spans 785 residues: B-cell scaffold protein with ankyrin repeats (785 aa).

The interval 1–154 is interaction with ITPR2; that stretch reads MLPAAPGKGL…DYISVIQSII (154 aa). Residues 25–153 enclose the TIR domain; sequence NTKDIIMIYE…EDYISVIQSI (129 aa). Residues 200–327 enclose the DBB domain; sequence VLPTEIPCEN…EIPYYEFQSL (128 aa). ANK repeat units lie at residues 342-371 and 378-408; these read ELPT…ATWA and EGSD…EIDI. Disordered regions lie at residues 433–480, 493–514, 538–578, and 606–625; these read PAFH…SESS, GADP…LPPP, QMER…EDPY, and FIIN…PPKE. A compositionally biased stretch (basic and acidic residues) spans 553–568; that stretch reads ETGDEPKGEKEKKEEE. Acidic residues predominate over residues 569–578; sequence KEQEEEEDPY. The segment covering 611 to 621 has biased composition (pro residues); it reads PPAPTPRPTSI.

As to quaternary structure, interacts with LYN, ITPR1 and ITPR2. Post-translationally, phosphorylated on tyrosines upon BCR activation. As to expression, expressed in B-cell but not T-cell or myeloid cell lines. Highest expression in CD19(+) B-cells, with very low expression in other cell populations.

Its function is as follows. Involved in B-cell receptor (BCR)-induced Ca(2+) mobilization from intracellular stores. Promotes Lyn-mediated phosphorylation of IP3 receptors 1 and 2. This is B-cell scaffold protein with ankyrin repeats (BANK1) from Homo sapiens (Human).